Reading from the N-terminus, the 426-residue chain is Inositol hexakisphosphate kinase 2 (426 aa).

Residues 207–209 and D220 each bind ATP; that span reads ENL. Substrate-binding positions include K222 and 236-243; that span reads KAANQIRK. D383 provides a ligand contact to ATP. Residue H386 participates in substrate binding.

The protein belongs to the inositol phosphokinase (IPK) family.

Its subcellular location is the nucleus. The enzyme catalyses 1D-myo-inositol hexakisphosphate + ATP = 5-diphospho-1D-myo-inositol 1,2,3,4,6-pentakisphosphate + ADP. It functions in the pathway phospholipid metabolism; phosphatidylinositol metabolism. Its activity is regulated as follows. Inhibited by flavonoids, including myricetin, quercetin, luteolin, isorhamnetin, rhamnetin, kaempferol, diosmetin and apigenin. Converts inositol hexakisphosphate (InsP6) to diphosphoinositol pentakisphosphate (InsP7/PP-InsP5). This chain is Inositol hexakisphosphate kinase 2, found in Homo sapiens (Human).